A 371-amino-acid chain; its full sequence is Ligninase LG2 (371 aa).

The signal sequence occupies residues 1 to 21; it reads MAFKQLFAAITVALSLTAANA. The propeptide occupies 22–28; it reads AVVKEKR. Disulfide bonds link Cys31–Cys43, Cys42–Cys313, Cys62–Cys148, and Cys277–Cys345. The Proton acceptor role is filled by His75. Ca(2+) contacts are provided by Asp76, Gly94, Asp96, and Ser98. Trp199 is subject to 3-hydroxytryptophan. His204 contacts heme b. Positions 205, 222, 224, 227, and 229 each coordinate Ca(2+). Asn285 carries N-linked (GlcNAc...) asparagine glycosylation.

The protein belongs to the peroxidase family. Ligninase subfamily. Ca(2+) serves as cofactor. Heme b is required as a cofactor.

The enzyme catalyses 1-(3,4-dimethoxyphenyl)-2-(2-methoxyphenoxy)propane-1,3-diol + H2O2 = 3,4-dimethoxybenzaldehyde + guaiacol + glycolaldehyde + H2O. It catalyses the reaction 2 (3,4-dimethoxyphenyl)methanol + H2O2 = 2 (3,4-dimethoxyphenyl)methanol radical + 2 H2O. Its pathway is secondary metabolite metabolism; lignin degradation. Depolymerization of lignin. Catalyzes the C(alpha)-C(beta) cleavage of the propyl side chains of lignin. This is Ligninase LG2 (GLG2) from Phanerodontia chrysosporium (White-rot fungus).